We begin with the raw amino-acid sequence, 137 residues long: Acidic phospholipase A2 beta-bungarotoxin A6 chain (137 aa).

An N-terminal signal peptide occupies residues 1–9 (AVCVSLLGA). The propeptide occupies 10-17 (ANIPPQHL). 6 cysteine pairs are disulfide-bonded: C44-C136, C46-C62, C61-C117, C68-C110, C78-C103, and C96-C108. The Ca(2+) site is built by Y45, G47, and G49. H65 is a catalytic residue. D66 is a binding site for Ca(2+). The active site involves D111.

Belongs to the phospholipase A2 family. Group I subfamily. D49 sub-subfamily. As to quaternary structure, heterodimer; disulfide-linked. The A chains have phospholipase A2 activity and the B chains show homology with the basic protease inhibitors. It depends on Ca(2+) as a cofactor. Expressed by the venom gland.

Its subcellular location is the secreted. The enzyme catalyses a 1,2-diacyl-sn-glycero-3-phosphocholine + H2O = a 1-acyl-sn-glycero-3-phosphocholine + a fatty acid + H(+). Its function is as follows. Snake venom phospholipase A2 (PLA2) that inhibits neuromuscular transmission by blocking acetylcholine release from the nerve termini. PLA2 catalyzes the calcium-dependent hydrolysis of the 2-acyl groups in 3-sn-phosphoglycerides. In Bungarus multicinctus (Many-banded krait), this protein is Acidic phospholipase A2 beta-bungarotoxin A6 chain.